A 43-amino-acid polypeptide reads, in one-letter code: Protein PsbN (43 aa).

A helical membrane pass occupies residues 5-27 (TLVAIFISCSLVSFTGYALYTAF).

It belongs to the PsbN family.

Its subcellular location is the plastid. It localises to the chloroplast thylakoid membrane. Functionally, may play a role in photosystem I and II biogenesis. The sequence is that of Protein PsbN from Exsertotheca crispa (Moss).